An 864-amino-acid chain; its full sequence is N-alpha-acetyltransferase 16, NatA auxiliary subunit (864 aa).

TPR repeat units lie at residues 46–79, 80–113, 148–184, 224–257, 374–407, 409–441, and 485–518; these read GETL…DVKS, HVCW…DKDN, RASW…PPNK, LLVE…NAEN, LWVQ…TPTL, ELFY…DTAD, and MWFQ…FFEI. The segment at 603–638 is disordered; that stretch reads QKKAKLEEERKHAERERQQKNQKKKRDEEEEEASGL. A compositionally biased stretch (basic and acidic residues) spans 606–621; it reads AKLEEERKHAERERQQ.

Component of the N-terminal acetyltransferase A (NatA) complex composed of NAA10 and NAA16.

In terms of biological role, auxillary subunit of the N-terminal acetyltransferase A (NatA) complex which displays alpha (N-terminal) acetyltransferase activity. This is N-alpha-acetyltransferase 16, NatA auxiliary subunit (NAA16) from Homo sapiens (Human).